The chain runs to 67 residues: Large ribosomal subunit protein bL31 (67 aa).

Residues Cys16, Cys18, Cys36, and Cys39 each contribute to the Zn(2+) site.

The protein belongs to the bacterial ribosomal protein bL31 family. Type A subfamily. In terms of assembly, part of the 50S ribosomal subunit. Requires Zn(2+) as cofactor.

Functionally, binds the 23S rRNA. The sequence is that of Large ribosomal subunit protein bL31 from Desulforudis audaxviator (strain MP104C).